Reading from the N-terminus, the 560-residue chain is 2-succinyl-5-enolpyruvyl-6-hydroxy-3-cyclohexene-1-carboxylate synthase (560 aa).

The protein belongs to the TPP enzyme family. MenD subfamily. As to quaternary structure, homodimer. Mg(2+) serves as cofactor. The cofactor is Mn(2+). Requires thiamine diphosphate as cofactor.

The enzyme catalyses isochorismate + 2-oxoglutarate + H(+) = 5-enolpyruvoyl-6-hydroxy-2-succinyl-cyclohex-3-ene-1-carboxylate + CO2. It participates in quinol/quinone metabolism; 1,4-dihydroxy-2-naphthoate biosynthesis; 1,4-dihydroxy-2-naphthoate from chorismate: step 2/7. Its pathway is quinol/quinone metabolism; menaquinone biosynthesis. In terms of biological role, catalyzes the thiamine diphosphate-dependent decarboxylation of 2-oxoglutarate and the subsequent addition of the resulting succinic semialdehyde-thiamine pyrophosphate anion to isochorismate to yield 2-succinyl-5-enolpyruvyl-6-hydroxy-3-cyclohexene-1-carboxylate (SEPHCHC). The protein is 2-succinyl-5-enolpyruvyl-6-hydroxy-3-cyclohexene-1-carboxylate synthase of Pectobacterium atrosepticum (strain SCRI 1043 / ATCC BAA-672) (Erwinia carotovora subsp. atroseptica).